We begin with the raw amino-acid sequence, 987 residues long: VPS35 endosomal protein sorting factor-like (987 aa).

A compositionally biased stretch (low complexity) spans 1 to 23 (MAERQSASSPTPSSPPQQQQQTP). The segment at 1–115 (MAERQSASSP…DPLNNPLEKK (115 aa)) is disordered. The segment covering 43-63 (NGREVERHPLNSITKTEDTGK) has biased composition (basic and acidic residues). Residues 66–111 (QSSLSSNASSLQSAAAAASSSTATTDIDPLNNNNNNNTDIDPLNNP) are compositionally biased toward low complexity.

The protein belongs to the VPS35L family. Component of the heterotrimeric retriever complex.

The protein resides in the endosome. Functionally, acts as a component of the retriever complex. The retriever complex is a heterotrimeric complex related to retromer cargo-selective complex (CSC) and essential for retromer-independent retrieval and recycling of numerous cargos. The chain is VPS35 endosomal protein sorting factor-like from Dictyostelium discoideum (Social amoeba).